We begin with the raw amino-acid sequence, 239 residues long: Geranylgeranylglyceryl phosphate synthase (239 aa).

Lys13 contributes to the sn-glycerol 1-phosphate binding site. Residues Asp15 and Thr42 each coordinate Mg(2+). Residues 162–167 (YIEYSG), Gly192, and 212–213 (GD) contribute to the sn-glycerol 1-phosphate site.

It belongs to the GGGP/HepGP synthase family. Group I subfamily. It depends on Mg(2+) as a cofactor.

The protein resides in the cytoplasm. It carries out the reaction sn-glycerol 1-phosphate + (2E,6E,10E)-geranylgeranyl diphosphate = sn-3-O-(geranylgeranyl)glycerol 1-phosphate + diphosphate. Its pathway is membrane lipid metabolism; glycerophospholipid metabolism. Prenyltransferase that catalyzes the transfer of the geranylgeranyl moiety of geranylgeranyl diphosphate (GGPP) to the C3 hydroxyl of sn-glycerol-1-phosphate (G1P). This reaction is the first ether-bond-formation step in the biosynthesis of archaeal membrane lipids. The sequence is that of Geranylgeranylglyceryl phosphate synthase from Haloquadratum walsbyi (strain DSM 16790 / HBSQ001).